Here is a 202-residue protein sequence, read N- to C-terminus: Recombination protein RecR (202 aa).

The C4-type zinc-finger motif lies at 58–73 (CANCGNLTDKKLCDIC). The Toprim domain occupies 81–178 (SVITVVEDSM…KVSRIAMGVP (98 aa)).

This sequence belongs to the RecR family.

Functionally, may play a role in DNA repair. It seems to be involved in an RecBC-independent recombinational process of DNA repair. It may act with RecF and RecO. The protein is Recombination protein RecR of Finegoldia magna (strain ATCC 29328 / DSM 20472 / WAL 2508) (Peptostreptococcus magnus).